The sequence spans 148 residues: SsrA-binding protein (148 aa).

The segment at 119–148 (AKGKKQHDKRQSMKEADWKREKQRLIKHTR) is disordered. Residues 127 to 142 (KRQSMKEADWKREKQR) are compositionally biased toward basic and acidic residues.

This sequence belongs to the SmpB family.

Its subcellular location is the cytoplasm. Required for rescue of stalled ribosomes mediated by trans-translation. Binds to transfer-messenger RNA (tmRNA), required for stable association of tmRNA with ribosomes. tmRNA and SmpB together mimic tRNA shape, replacing the anticodon stem-loop with SmpB. tmRNA is encoded by the ssrA gene; the 2 termini fold to resemble tRNA(Ala) and it encodes a 'tag peptide', a short internal open reading frame. During trans-translation Ala-aminoacylated tmRNA acts like a tRNA, entering the A-site of stalled ribosomes, displacing the stalled mRNA. The ribosome then switches to translate the ORF on the tmRNA; the nascent peptide is terminated with the 'tag peptide' encoded by the tmRNA and targeted for degradation. The ribosome is freed to recommence translation, which seems to be the essential function of trans-translation. This is SsrA-binding protein from Neisseria meningitidis serogroup C (strain 053442).